Consider the following 447-residue polypeptide: Na(+)-translocating NADH-quinone reductase subunit A (447 aa).

This sequence belongs to the NqrA family. In terms of assembly, composed of six subunits; NqrA, NqrB, NqrC, NqrD, NqrE and NqrF.

The enzyme catalyses a ubiquinone + n Na(+)(in) + NADH + H(+) = a ubiquinol + n Na(+)(out) + NAD(+). Its function is as follows. NQR complex catalyzes the reduction of ubiquinone-1 to ubiquinol by two successive reactions, coupled with the transport of Na(+) ions from the cytoplasm to the periplasm. NqrA to NqrE are probably involved in the second step, the conversion of ubisemiquinone to ubiquinol. This chain is Na(+)-translocating NADH-quinone reductase subunit A, found in Haemophilus influenzae (strain PittEE).